The sequence spans 133 residues: MATENNKNPAIRFLLSVVGSGNSLSILNGLFLSFKTILASSSATLLLNLALVENECSKEPRTSTALAAEGVTFGNPLVTSLNIMYSLFYLLLLCRGLVRRERSNCFKTGIKMTRRRFLSLHNDQNKNKQNAKR.

The next 2 helical transmembrane spans lie at 13–33 (FLLS…LFLS) and 73–93 (FGNP…LLLL).

The protein localises to the membrane. This is an uncharacterized protein from Saccharomyces cerevisiae (strain ATCC 204508 / S288c) (Baker's yeast).